We begin with the raw amino-acid sequence, 117 residues long: Ribosome-binding factor A (117 aa).

This sequence belongs to the RbfA family. As to quaternary structure, monomer. Binds 30S ribosomal subunits, but not 50S ribosomal subunits or 70S ribosomes.

The protein resides in the cytoplasm. Functionally, one of several proteins that assist in the late maturation steps of the functional core of the 30S ribosomal subunit. Associates with free 30S ribosomal subunits (but not with 30S subunits that are part of 70S ribosomes or polysomes). Required for efficient processing of 16S rRNA. May interact with the 5'-terminal helix region of 16S rRNA. The polypeptide is Ribosome-binding factor A (Leuconostoc citreum (strain KM20)).